A 1523-amino-acid polypeptide reads, in one-letter code: ATP-binding cassette sub-family C member 3 (1523 aa).

The Extracellular portion of the chain corresponds to 1-35 (MDRLCGSGELGSKFWDSNLSIYTNTPDLTPCFQNS). Asparagine 18 carries N-linked (GlcNAc...) asparagine glycosylation. The helical transmembrane segment at 36–56 (LLAWVPCIYLWAALPCYLFYL) threads the bilayer. Residues 57-75 (RHHQLGYIVLSWLSRLKTA) lie on the Cytoplasmic side of the membrane. A helical membrane pass occupies residues 76–96 (LGVLLWCVSWVDLFYSFHGLI). Residues 97–102 (HGSSPA) are Extracellular-facing. The helical transmembrane segment at 103-123 (PVFFVTPLVVGITMLLATLLI) threads the bilayer. The Cytoplasmic segment spans residues 124 to 129 (QYERLR). A helical membrane pass occupies residues 130-150 (GVQSSGVLIIFWLLCVICAII). Residues 151–170 (PFRSKILSALAEGKILDPFR) lie on the Extracellular side of the membrane. Residues 171-191 (FTTFYIYFALVFCALILSCFK) traverse the membrane as a helical segment. Over 192-301 (EKPPLFSPEN…KSKQPSFLRA (110 aa)) the chain is Cytoplasmic. The helical transmembrane segment at 302–324 (LVRTFTSSLLMSACFNLIQNLLG) threads the bilayer. Residues 310–593 (LLMSACFNLI…LPQLISGLTQ (284 aa)) enclose the ABC transmembrane type-1 1 domain. The Extracellular segment spans residues 325 to 345 (FVNPQLLSILIRFISDPTAPT). The helical transmembrane segment at 346 to 366 (WWGFLLAGLMFLSSTMQTLIL) threads the bilayer. Residues 367–419 (HQYYHCIFVMALRLRTAIIGVIYRKALVITNSVKRESTVGEMVNLMSVDAQRF) are Cytoplasmic-facing. Residues 420-440 (MDVSPFINLLWSAPLQVILAI) form a helical membrane-spanning segment. Tyrosine 441 is a topological domain (extracellular). The helical transmembrane segment at 442-462 (FLWQILGPSALAGVAVIVLLI) threads the bilayer. Topologically, residues 463 to 535 (PLNGAVSMKM…KGAYLQAIST (73 aa)) are cytoplasmic. The chain crosses the membrane as a helical span at residues 536–556 (FIWICTPFLVTLITLGVYVYV). Topologically, residues 557 to 567 (DESNVLDAEKA) are extracellular. The helical transmembrane segment at 568–588 (FVSLSLFNILKIPLNMLPQLI) threads the bilayer. The Cytoplasmic segment spans residues 589–967 (SGLTQASVSL…YAKSMGLCTT (379 aa)). The region spanning 626 to 850 (ITIHNGTFTW…DGSFANFLRN (225 aa)) is the ABC transporter 1 domain. ATP is bound at residue 660-667 (GPVGCGKS). A phosphoserine mark is found at serine 903 and serine 906. A compositionally biased stretch (polar residues) spans 903–915 (SSLSSEGEVQNRT). A disordered region spans residues 903-923 (SSLSSEGEVQNRTMPKKHTNS). An ABC transmembrane type-1 2 domain is found at 967–1248 (TLSICLLYGG…MIRMISDLES (282 aa)). Residues 968–988 (LSICLLYGGQSAAAIGANVWL) form a helical membrane-spanning segment. The Extracellular portion of the chain corresponds to 989–1013 (SAWSNDAEEHGQQNKTSVRLGVYAA). The N-linked (GlcNAc...) asparagine glycan is linked to asparagine 1002. The chain crosses the membrane as a helical span at residues 1014–1034 (LGILQGLLVMLSAFTMVVGAI). Residues 1035 to 1071 (QAARLLHEALLHNKIRSPQSFFDTTPSGRILNRFSKD) lie on the Cytoplasmic side of the membrane. The helical transmembrane segment at 1072-1092 (IYVIDEVLAPTILMLLNSFFT) threads the bilayer. The Extracellular segment spans residues 1093–1096 (SIST). Residues 1097-1117 (IMVIVASTPLFMVVVLPLAVL) form a helical membrane-spanning segment. Residues 1118 to 1191 (YGFVQRFYVA…YPYIASNRWL (74 aa)) lie on the Cytoplasmic side of the membrane. A helical membrane pass occupies residues 1192-1212 (GVHVEFVGNCVVLFAALFAVI). The Extracellular portion of the chain corresponds to 1213-1219 (GRNSLNP). The chain crosses the membrane as a helical span at residues 1220-1240 (GLVGLSVSYALQVTMALNWMI). Residues 1241-1523 (RMISDLESNI…YGMAKDAGLA (283 aa)) lie on the Cytoplasmic side of the membrane. The 233-residue stretch at 1287 to 1519 (FRNYSVRYRP…GGIFYGMAKD (233 aa)) folds into the ABC transporter 2 domain. 1319–1326 (GRTGAGKS) contacts ATP.

This sequence belongs to the ABC transporter superfamily. ABCC family. Conjugate transporter (TC 3.A.1.208) subfamily. Detected throughout the gastrointestinal tract, liver, lung, pancreas, bladder, gall bladder and at low levels in the adrenal gland.

It localises to the basolateral cell membrane. The protein localises to the basal cell membrane. It catalyses the reaction an S-substituted glutathione(in) + ATP + H2O = an S-substituted glutathione(out) + ADP + phosphate + H(+). The catalysed reaction is ATP + H2O + xenobioticSide 1 = ADP + phosphate + xenobioticSide 2.. The enzyme catalyses 17beta-estradiol 17-O-(beta-D-glucuronate)(in) + ATP + H2O = 17beta-estradiol 17-O-(beta-D-glucuronate)(out) + ADP + phosphate + H(+). It carries out the reaction dehydroepiandrosterone 3-sulfate(in) + ATP + H2O = dehydroepiandrosterone 3-sulfate(out) + ADP + phosphate + H(+). It catalyses the reaction leukotriene C4(in) + ATP + H2O = leukotriene C4(out) + ADP + phosphate + H(+). The catalysed reaction is taurocholate(in) + ATP + H2O = taurocholate(out) + ADP + phosphate + H(+). The enzyme catalyses glycocholate(in) + ATP + H2O = glycocholate(out) + ADP + phosphate + H(+). It carries out the reaction taurolithocholate 3-sulfate(in) + ATP + H2O = taurolithocholate 3-sulfate(out) + ADP + phosphate + H(+). It catalyses the reaction taurochenodeoxycholate 3-sulfate(in) + ATP + H2O = taurochenodeoxycholate 3-sulfate(out) + ADP + phosphate + H(+). The catalysed reaction is (4Z,15Z)-bilirubin IXalpha C8-beta-D-glucuronoside(in) + ATP + H2O = (4Z,15Z)-bilirubin IXalpha C8-beta-D-glucuronoside(out) + ADP + phosphate + H(+). The enzyme catalyses (4Z,15Z)-bilirubin IXalpha C8,C12-beta-D-bisglucuronoside(in) + ATP + H2O = (4Z,15Z)-bilirubin IXalpha C8,C12-beta-D-bisglucuronoside(out) + ADP + phosphate + H(+). Functionally, ATP-dependent transporter of the ATP-binding cassette (ABC) family that binds and hydrolyzes ATP to enable active transport of various substrates including many drugs, toxicants and endogenous compound across cell membranes. Transports glucuronide conjugates such as bilirubin diglucuronide, estradiol-17-beta-o-glucuronide and GSH conjugates such as leukotriene C4 (LTC4). Transports also various bile salts (taurocholate, glycocholate, taurochenodeoxycholate-3-sulfate, taurolithocholate- 3-sulfate). Does not contribute substantially to bile salt physiology but provides an alternative route for the export of bile acids and glucuronides from cholestatic hepatocytes. May contribute to regulate the transport of organic compounds in testes across the blood-testis-barrier. This is ATP-binding cassette sub-family C member 3 (Abcc3) from Mus musculus (Mouse).